The primary structure comprises 128 residues: Fluoride-specific ion channel FluC (128 aa).

Helical transmembrane passes span Ile5–Ala25, Leu35–Phe55, Leu67–Val87, and Phe96–Leu116. Positions 75 and 78 each coordinate Na(+).

The protein belongs to the fluoride channel Fluc/FEX (TC 1.A.43) family.

It localises to the cell inner membrane. It carries out the reaction fluoride(in) = fluoride(out). With respect to regulation, na(+) is not transported, but it plays an essential structural role and its presence is essential for fluoride channel function. Functionally, fluoride-specific ion channel. Important for reducing fluoride concentration in the cell, thus reducing its toxicity. This Burkholderia vietnamiensis (strain G4 / LMG 22486) (Burkholderia cepacia (strain R1808)) protein is Fluoride-specific ion channel FluC.